We begin with the raw amino-acid sequence, 444 residues long: Phosphoribosylamine--glycine ligase (444 aa).

In terms of domain architecture, ATP-grasp spans 109-324 (RNLFKKYEID…FLDVCFAIAE (216 aa)). 140–202 (MTSLGKDVVV…EEKLVGVEFT (63 aa)) is an ATP binding site. Mg(2+)-binding residues include Gln-282, Glu-294, and Asn-296. Positions 282, 294, and 296 each coordinate Mn(2+).

It belongs to the GARS family. The cofactor is Mg(2+). Requires Mn(2+) as cofactor.

It catalyses the reaction 5-phospho-beta-D-ribosylamine + glycine + ATP = N(1)-(5-phospho-beta-D-ribosyl)glycinamide + ADP + phosphate + H(+). It participates in purine metabolism; IMP biosynthesis via de novo pathway; N(1)-(5-phospho-D-ribosyl)glycinamide from 5-phospho-alpha-D-ribose 1-diphosphate: step 2/2. This is Phosphoribosylamine--glycine ligase from Methanococcus maripaludis (strain C5 / ATCC BAA-1333).